The chain runs to 169 residues: Ribosome maturation factor RimM (169 aa).

The PRC barrel domain occupies 94–168 (EEGQYYYHQI…KVIVELLEGL (75 aa)).

It belongs to the RimM family. In terms of assembly, binds ribosomal protein uS19.

It localises to the cytoplasm. In terms of biological role, an accessory protein needed during the final step in the assembly of 30S ribosomal subunit, possibly for assembly of the head region. Essential for efficient processing of 16S rRNA. May be needed both before and after RbfA during the maturation of 16S rRNA. It has affinity for free ribosomal 30S subunits but not for 70S ribosomes. This chain is Ribosome maturation factor RimM, found in Limosilactobacillus fermentum (strain NBRC 3956 / LMG 18251) (Lactobacillus fermentum).